The following is a 446-amino-acid chain: MSTVSSDPAHAKKSRNSRKALKQKNEIVESSPVSDKGKETKSFEKDLMEMQAMLEKMKIEKEKTEDLLKEKDEILRKKEVEQEKLKTELKKLQKMKEFKPNMTFAFSQSLAQTEEEKKGKKKKKDCAETKRPSTPYILWCKDNWNEVKKQNPEADFKETSNILGAKWKGISAEEKKPYEEKYQADKEAYLQVITKEKREREAMKLLDDEQKQKTAMELLDQYLHFVQEAEHDNKKKAKKIKDPLKPKQPISAYLIYANERRAALKGENKSVIEVAKMAGEEWKNLSEEKKAPYDQMAKKNKEIYLQEMEGYKRTKEEEAMSQKKEEEEFMKLHKQEALQLLKKKEKTDNIIKKTKETAKNKKKNENVDPNKPKKPTSSYFLFCKDARKSVLEEHPGINNSTVTAHISLKWMELGEEEKQVYNSKAAELMEAYKKEVEEYNKTKTSS.

Disordered stretches follow at residues 1–43 (MSTV…TKSF) and 110–130 (LAQT…AETK). Over residues 11–22 (AKKSRNSRKALK) the composition is skewed to basic residues. DNA-binding regions (HMG box) lie at residues 129–197 (TKRP…TKEK) and 246–312 (PKQP…EGYK). A compositionally biased stretch (basic and acidic residues) spans 349–371 (NIIKKTKETAKNKKKNENVDPNK). The segment at 349–377 (NIIKKTKETAKNKKKNENVDPNKPKKPTS) is disordered. Positions 372-440 (PKKPTSSYFL…AYKKEVEEYN (69 aa)) form a DNA-binding region, HMG box 3.

It belongs to the HMGB family.

It is found in the nucleus. The polypeptide is High mobility group B protein 13 (HMGB13) (Arabidopsis thaliana (Mouse-ear cress)).